The chain runs to 195 residues: HTH-type transcriptional regulator BetI (195 aa).

Residues Ser-8 to Leu-68 form the HTH tetR-type domain. The H-T-H motif DNA-binding region spans Thr-31 to Phe-50.

The protein operates within amine and polyamine biosynthesis; betaine biosynthesis via choline pathway [regulation]. Repressor involved in the biosynthesis of the osmoprotectant glycine betaine. It represses transcription of the choline transporter BetT and the genes of BetAB involved in the synthesis of glycine betaine. This Shigella flexneri serotype 5b (strain 8401) protein is HTH-type transcriptional regulator BetI.